A 331-amino-acid polypeptide reads, in one-letter code: tRNA U34 carboxymethyltransferase (331 aa).

Carboxy-S-adenosyl-L-methionine contacts are provided by residues K91, W105, K110, G130, 152-154 (DPS), 181-182 (IE), M196, Y200, and R315.

Belongs to the class I-like SAM-binding methyltransferase superfamily. CmoB family. As to quaternary structure, homotetramer.

The enzyme catalyses carboxy-S-adenosyl-L-methionine + 5-hydroxyuridine(34) in tRNA = 5-carboxymethoxyuridine(34) in tRNA + S-adenosyl-L-homocysteine + H(+). Catalyzes carboxymethyl transfer from carboxy-S-adenosyl-L-methionine (Cx-SAM) to 5-hydroxyuridine (ho5U) to form 5-carboxymethoxyuridine (cmo5U) at position 34 in tRNAs. The polypeptide is tRNA U34 carboxymethyltransferase (Shewanella baltica (strain OS155 / ATCC BAA-1091)).